We begin with the raw amino-acid sequence, 188 residues long: Elongation factor P (188 aa).

It belongs to the elongation factor P family.

The protein resides in the cytoplasm. It functions in the pathway protein biosynthesis; polypeptide chain elongation. Involved in peptide bond synthesis. Stimulates efficient translation and peptide-bond synthesis on native or reconstituted 70S ribosomes in vitro. Probably functions indirectly by altering the affinity of the ribosome for aminoacyl-tRNA, thus increasing their reactivity as acceptors for peptidyl transferase. The chain is Elongation factor P (efp) from Rickettsia prowazekii (strain Madrid E).